The chain runs to 150 residues: Leukotriene C4 synthase (150 aa).

At 1–6 the chain is on the cytoplasmic side; the sequence is MKDEVA. A helical transmembrane segment spans residues 7–27; it reads LLATVTLVGVLLQAYFSLQVI. Residues 28-48 are Lumenal-facing; the sequence is SARRAFHVSPPLTSGPPEFER. R30 contacts glutathione. R31 (proton donor) is an active-site residue. A Phosphoserine modification is found at S36. Residues 49–69 traverse the membrane as a helical segment; it reads VFRAQVNCSEYFPLFLATLWV. Glutathione is bound by residues 51 to 55, Q53, and 58 to 59; these read RAQVN and EY. At 70-73 the chain is on the cytoplasmic side; the sequence is AGIF. The helical transmembrane segment at 74–94 threads the bilayer; the sequence is FHEGAAALCGLFYLFARLRYF. 93 to 97 provides a ligand contact to glutathione; that stretch reads YFQGY. Topologically, residues 95–104 are lumenal; that stretch reads QGYARSAQLR. R104 (proton acceptor) is an active-site residue. A helical transmembrane segment spans residues 105-124; that stretch reads LTPLYASARALWLLVAMAAL. Topologically, residues 125-150 are cytoplasmic; the sequence is GLLVHFLPGTLRTALFRWLQMLLPMA.

It belongs to the MAPEG family. In terms of assembly, homotrimer. Interacts with ALOX5AP and ALOX5. Post-translationally, phosphorylation at Ser-36 by RPS6KB1 inhibits the leukotriene-C4 synthase activity. As to expression, widely expressed.

It is found in the nucleus outer membrane. The protein localises to the endoplasmic reticulum membrane. It localises to the nucleus membrane. It carries out the reaction leukotriene C4 = leukotriene A4 + glutathione. The enzyme catalyses (13S,14S)-epoxy-(4Z,7Z,9E,11E,16Z,19Z)-docosahexaenoate + glutathione = (13R)-S-glutathionyl-(14S)-hydroxy-(4Z,7Z,9E,11E,16Z,19Z)-docosahexaenoate. It functions in the pathway lipid metabolism; leukotriene C4 biosynthesis. Its activity is regulated as follows. Inhibited by MK886. Catalyzes the conjugation of leukotriene A4 with reduced glutathione (GSH) to form leukotriene C4 with high specificity. Can also catalyze the transfer of a glutathionyl group from glutathione (GSH) to 13(S),14(S)-epoxy-docosahexaenoic acid to form maresin conjugate in tissue regeneration 1 (MCTR1), a bioactive lipid mediator that possess potent anti-inflammatory and proresolving actions. In Mus musculus (Mouse), this protein is Leukotriene C4 synthase (Ltc4s).